We begin with the raw amino-acid sequence, 352 residues long: Ion-translocating oxidoreductase complex subunit D (352 aa).

A run of 5 helical transmembrane segments spans residues 20-40, 42-62, 78-109, 123-143, and 148-168; these read IMLLVLLAAVPGIAAQLWFFG, GTLVQILLASVSALLAEALVL, ALLTGLLLAVSIPPLAPWWMVVLGTVFAVIIA, PAMIGYVVLLISFPVQMTSWL, and IAVNIPGFIDAIQVIFSGHTA. T187 carries the FMN phosphoryl threonine modification. 5 helical membrane passes run 214-234, 242-262, 267-287, 301-321, and 322-342; these read ILAGAGWQWVNLAWLAGGVWL, WHIPLSFLVTLALCAMLGWLF, LAAPQIHLLSGATMLGAFFIL, LIFGALAGLLVWLIRSFGGYP, and DGVAFAVLLANITVPLIDYYT.

This sequence belongs to the NqrB/RnfD family. As to quaternary structure, the complex is composed of six subunits: RsxA, RsxB, RsxC, RsxD, RsxE and RsxG. Requires FMN as cofactor.

The protein localises to the cell inner membrane. In terms of biological role, part of a membrane-bound complex that couples electron transfer with translocation of ions across the membrane. Required to maintain the reduced state of SoxR. Probably transfers electron from NAD(P)H to SoxR. The sequence is that of Ion-translocating oxidoreductase complex subunit D from Escherichia coli (strain K12).